We begin with the raw amino-acid sequence, 205 residues long: Methylthioribulose-1-phosphate dehydratase (205 aa).

Histidine 96 and histidine 98 together coordinate Zn(2+).

This sequence belongs to the aldolase class II family. MtnB subfamily. Requires Zn(2+) as cofactor.

It carries out the reaction 5-(methylsulfanyl)-D-ribulose 1-phosphate = 5-methylsulfanyl-2,3-dioxopentyl phosphate + H2O. The protein operates within amino-acid biosynthesis; L-methionine biosynthesis via salvage pathway; L-methionine from S-methyl-5-thio-alpha-D-ribose 1-phosphate: step 2/6. Catalyzes the dehydration of methylthioribulose-1-phosphate (MTRu-1-P) into 2,3-diketo-5-methylthiopentyl-1-phosphate (DK-MTP-1-P). In Pseudomonas aeruginosa (strain UCBPP-PA14), this protein is Methylthioribulose-1-phosphate dehydratase.